The chain runs to 208 residues: Histone H1.3 (208 aa).

Ser-2 carries the N-acetylserine modification. The H15 domain maps to 37–113; the sequence is AHPPYINMVT…GASGRFRVTE (77 aa). Positions 113–208 are disordered; that stretch reads EKKAAAAKKP…PAKKAVAPKT (96 aa). Basic residues-rich tracts occupy residues 148-158 and 165-191; these read KAKKTTATKTK and KKVK…KSAP. Residues 192 to 208 show a composition bias toward low complexity; that stretch reads KKAAAAKPAKKAVAPKT.

Belongs to the histone H1/H5 family.

Its subcellular location is the nucleus. It localises to the chromosome. Histones H1 are necessary for the condensation of nucleosome chains into higher-order structures. In Caenorhabditis elegans, this protein is Histone H1.3 (hil-3).